The sequence spans 302 residues: Short-chain dehydrogenase/reductase 3 (302 aa).

The next 4 helical transmembrane spans lie at 9–29 (LVMFPLQMIYLVVKAAVGLVL), 170–190 (IVCLNSVLALSAIPGAIDYCT), 195–215 (AFAFMESLTLGLLDCPGVSAT), and 253–273 (AVQLNQALLLLPWTMHALVIL). Serine 175 lines the substrate pocket. The active-site Proton acceptor is the tyrosine 188.

The protein belongs to the short-chain dehydrogenases/reductases (SDR) family. In terms of tissue distribution, widely expressed with highest levels found in heart, placenta, lung, liver, kidney, pancreas, thyroid, testis, stomach, trachea and spinal cord. Lower levels found in skeletal muscle, intestine and lymph node. No expression detected in brain. In the retina, expressed in cone but not rod outer segments.

It is found in the membrane. It carries out the reaction all-trans-retinol + NADP(+) = all-trans-retinal + NADPH + H(+). Its function is as follows. Catalyzes the reduction of all-trans-retinal to all-trans-retinol in the presence of NADPH. This is Short-chain dehydrogenase/reductase 3 (DHRS3) from Homo sapiens (Human).